A 477-amino-acid chain; its full sequence is Bifunctional protein HldE (477 aa).

The tract at residues 1–318 (MKVTLPEFER…ENAVRGRAET (318 aa)) is ribokinase. 195–198 (NLSE) is a binding site for ATP. Asp-264 is an active-site residue. Positions 344 to 477 (MTNGVFDILH…IKKIQKDSDK (134 aa)) are cytidylyltransferase.

This sequence in the N-terminal section; belongs to the carbohydrate kinase PfkB family. It in the C-terminal section; belongs to the cytidylyltransferase family. In terms of assembly, homodimer.

The enzyme catalyses D-glycero-beta-D-manno-heptose 7-phosphate + ATP = D-glycero-beta-D-manno-heptose 1,7-bisphosphate + ADP + H(+). It catalyses the reaction D-glycero-beta-D-manno-heptose 1-phosphate + ATP + H(+) = ADP-D-glycero-beta-D-manno-heptose + diphosphate. It participates in nucleotide-sugar biosynthesis; ADP-L-glycero-beta-D-manno-heptose biosynthesis; ADP-L-glycero-beta-D-manno-heptose from D-glycero-beta-D-manno-heptose 7-phosphate: step 1/4. Its pathway is nucleotide-sugar biosynthesis; ADP-L-glycero-beta-D-manno-heptose biosynthesis; ADP-L-glycero-beta-D-manno-heptose from D-glycero-beta-D-manno-heptose 7-phosphate: step 3/4. Catalyzes the phosphorylation of D-glycero-D-manno-heptose 7-phosphate at the C-1 position to selectively form D-glycero-beta-D-manno-heptose-1,7-bisphosphate. Functionally, catalyzes the ADP transfer from ATP to D-glycero-beta-D-manno-heptose 1-phosphate, yielding ADP-D-glycero-beta-D-manno-heptose. In Klebsiella pneumoniae (strain 342), this protein is Bifunctional protein HldE.